The sequence spans 687 residues: MIHHNNYPQLRIELASPEQIRAWAERRLPNGEVVGQVTQASTFHYKTHKPERDGLFCEKIFGPIRSGICSCGNSKSVDEKKEYSNFCKQCGVEFTDSRVRRYRMGYIKLACPVTHVWYLKRLPSYIANILAKPLKELENLVYGDTYPNLFLARPVAKKPNLLRLRGLCNYDNQSWIKILSRFFSTRGFEIFQGREIATGGHAIKKQLASLDLKSVFNSAYLEWKELSEVESTEDEWEDQTIQRRKDFLIRRMKLSKHFLHTNIKPEWMVLDVLPVLPPELRPMIELSEGDVITSDFNELYRKIIYRNNILLDLLLKSAFTPEGLIICQKKLIQEAVDALIDNGIRGQPLRDSNNRPYKSFSEVIEGKEGRFRENLLGKRVDYSGRSVIVVGPSLQLHQCGLPREMAIELFQSFVIRGLIGRHLARNLRDAKNIIRNKEIFIWKILQEVMQGHPVLLNRAPTLHRLGIQAFQPVLIEGRAIRLHPLVCGGFNADFDGDQMAVHVPLSIEAQTEARVLMFSHTNLLSPATGDPIAVPSQDMLLGLYVLTIENSQGIYGNRYYPNERTKDPISSFSRIPYFSNYDDILRAKEQERVDLHSPLWLRWQKDLRIITSLTRELPIEIQYESSGISFQIYENYQIRKGQSEDILSLYILTTAGRILFNQQIEEAIQSTLEASQHRNQQLLAITI.

Zn(2+) is bound by residues Cys69, Cys71, Cys87, and Cys90. Residues Asp493, Asp495, and Asp497 each coordinate Mg(2+).

It belongs to the RNA polymerase beta' chain family. RpoC1 subfamily. In plastids the minimal PEP RNA polymerase catalytic core is composed of four subunits: alpha, beta, beta', and beta''. When a (nuclear-encoded) sigma factor is associated with the core the holoenzyme is formed, which can initiate transcription. Mg(2+) serves as cofactor. The cofactor is Zn(2+).

The protein localises to the plastid. It is found in the chloroplast. The catalysed reaction is RNA(n) + a ribonucleoside 5'-triphosphate = RNA(n+1) + diphosphate. DNA-dependent RNA polymerase catalyzes the transcription of DNA into RNA using the four ribonucleoside triphosphates as substrates. In Angiopteris evecta (Mule's foot fern), this protein is DNA-directed RNA polymerase subunit beta'.